A 154-amino-acid polypeptide reads, in one-letter code: Large ribosomal subunit protein uL13 (154 aa).

The protein belongs to the universal ribosomal protein uL13 family. Part of the 50S ribosomal subunit.

In terms of biological role, this protein is one of the early assembly proteins of the 50S ribosomal subunit, although it is not seen to bind rRNA by itself. It is important during the early stages of 50S assembly. In Brucella canis (strain ATCC 23365 / NCTC 10854 / RM-666), this protein is Large ribosomal subunit protein uL13.